Reading from the N-terminus, the 357-residue chain is MHLSNFYFKIPKSLIAFYPCFIRSQSRLLIINGHTGKIAHKFFFNILNEINSGDLIIFNDTKVIPARLFGYKKSGGRVEVLLERILNKNSILASIKSSNEIKMNSYLFFGKKNKIKSFIIGYKNPFYIIKFLHNKKSVIDIFNNIGHIPLPPYIKRFNEKIDSSLYQTVYKKNLGSVAAPTAGLHFDLPLLEALSKKGVDIDFLTLHIGSGTFQPIRTAKIEKHIMHSELVEVSSNLIQKIKLCKKKGGRIIAVGTTTLRALESAYHSNSWNNKKNYVKDTNIFIYPGYKHNVVDALITNFHFPESTLIMLVCSFLGYKNTMNAYHEAIKNNYRFFSYGDAMYITYNTHAPYEKILT.

This sequence belongs to the QueA family. As to quaternary structure, monomer.

The protein localises to the cytoplasm. It catalyses the reaction 7-aminomethyl-7-carbaguanosine(34) in tRNA + S-adenosyl-L-methionine = epoxyqueuosine(34) in tRNA + adenine + L-methionine + 2 H(+). It participates in tRNA modification; tRNA-queuosine biosynthesis. Transfers and isomerizes the ribose moiety from AdoMet to the 7-aminomethyl group of 7-deazaguanine (preQ1-tRNA) to give epoxyqueuosine (oQ-tRNA). This is S-adenosylmethionine:tRNA ribosyltransferase-isomerase from Buchnera aphidicola subsp. Schizaphis graminum (strain Sg).